The chain runs to 645 residues: 1,4-alpha-glucan branching enzyme GlgB (645 aa).

The Nucleophile role is filled by D309. Catalysis depends on E352, which acts as the Proton donor. The interval 619–645 (VKTRKGSKKQDGSKTKVRSNVTSRGKR) is disordered. Over residues 636-645 (RSNVTSRGKR) the composition is skewed to polar residues.

Belongs to the glycosyl hydrolase 13 family. GlgB subfamily. In terms of assembly, monomer.

It catalyses the reaction Transfers a segment of a (1-&gt;4)-alpha-D-glucan chain to a primary hydroxy group in a similar glucan chain.. Its pathway is glycan biosynthesis; glycogen biosynthesis. Functionally, catalyzes the formation of the alpha-1,6-glucosidic linkages in glycogen by scission of a 1,4-alpha-linked oligosaccharide from growing alpha-1,4-glucan chains and the subsequent attachment of the oligosaccharide to the alpha-1,6 position. The chain is 1,4-alpha-glucan branching enzyme GlgB from Bacillus cereus (strain ATCC 10987 / NRS 248).